We begin with the raw amino-acid sequence, 347 residues long: L-threonine 3-dehydrogenase (347 aa).

Cys-42 lines the Zn(2+) pocket. Catalysis depends on charge relay system residues Thr-44 and His-47. Zn(2+)-binding residues include His-67, Glu-68, Cys-97, Cys-100, Cys-103, and Cys-111. NAD(+)-binding positions include Ile-180, Asp-200, Arg-205, 267–269 (LSL), and 292–293 (IT).

This sequence belongs to the zinc-containing alcohol dehydrogenase family. In terms of assembly, homotetramer. The cofactor is Zn(2+).

The protein localises to the cytoplasm. The enzyme catalyses L-threonine + NAD(+) = (2S)-2-amino-3-oxobutanoate + NADH + H(+). Its pathway is amino-acid degradation; L-threonine degradation via oxydo-reductase pathway; glycine from L-threonine: step 1/2. Catalyzes the NAD(+)-dependent oxidation of L-threonine to 2-amino-3-ketobutyrate. The sequence is that of L-threonine 3-dehydrogenase from Bacillus velezensis (strain DSM 23117 / BGSC 10A6 / LMG 26770 / FZB42) (Bacillus amyloliquefaciens subsp. plantarum).